Consider the following 86-residue polypeptide: Protein Tat (86 aa).

Residues 1–24 (MEPVDPRLEPWKHPGSQPKTACTN) are interaction with human CREBBP. The interval 1–48 (MEPVDPRLEPWKHPGSQPKTACTNCYCKKCCFHCQVCFITKALGISYG) is transactivation. 3 residues coordinate Zn(2+): Cys-22, Cys-25, and Cys-27. A cysteine-rich region spans residues 22–37 (CTNCYCKKCCFHCQVC). Lys-28 carries the post-translational modification N6-acetyllysine; by host PCAF. Residues Cys-30, His-33, Cys-34, and Cys-37 each coordinate Zn(2+). A core region spans residues 38–48 (FITKALGISYG). Over residues 48–59 (GRKKRRQRRRAH) the composition is skewed to basic residues. A disordered region spans residues 48 to 86 (GRKKRRQRRRAHQNSQTHQASLSKQPTSQPRGDPTGPKE). A Nuclear localization signal, RNA-binding (TAR), and protein transduction motif is present at residues 49 to 57 (RKKRRQRRR). Residues 49-86 (RKKRRQRRRAHQNSQTHQASLSKQPTSQPRGDPTGPKE) are interaction with the host capping enzyme RNGTT. Residues Lys-50 and Lys-51 each carry the N6-acetyllysine; by host EP300 and GCN5L2 modification. Residues Arg-52 and Arg-53 each carry the asymmetric dimethylarginine; by host PRMT6 modification. The segment covering 60–77 (QNSQTHQASLSKQPTSQP) has biased composition (polar residues). Lys-71 participates in a covalent cross-link: Glycyl lysine isopeptide (Lys-Gly) (interchain with G-Cter in ubiquitin). The Cell attachment site motif lies at 78–80 (RGD).

This sequence belongs to the lentiviruses Tat family. As to quaternary structure, interacts with host CCNT1. Associates with the P-TEFb complex composed at least of Tat, P-TEFb (CDK9 and CCNT1), TAR RNA, RNA Pol II. Recruits the HATs CREBBP, TAF1/TFIID, EP300, PCAF and GCN5L2. Interacts with host KAT5/Tip60; this interaction targets the latter to degradation. Interacts with the host deacetylase SIRT1. Interacts with host capping enzyme RNGTT; this interaction stimulates RNGTT. Binds to host KDR, and to the host integrins ITGAV/ITGB3 and ITGA5/ITGB1. Interacts with host KPNB1/importin beta-1 without previous binding to KPNA1/importin alpha-1. Interacts with EIF2AK2. Interacts with host nucleosome assembly protein NAP1L1; this interaction may be required for the transport of Tat within the nucleus, since the two proteins interact at the nuclear rim. Interacts with host C1QBP/SF2P32; this interaction involves lysine-acetylated Tat. Interacts with the host chemokine receptors CCR2, CCR3 and CXCR4. Interacts with host DPP4/CD26; this interaction may trigger an anti-proliferative effect. Interacts with host LDLR. Interacts with the host extracellular matrix metalloproteinase MMP1. Interacts with host PRMT6; this interaction mediates Tat's methylation. Interacts with, and is ubiquitinated by MDM2/Hdm2. Interacts with host PSMC3 and HTATIP2. Interacts with STAB1; this interaction may overcome SATB1-mediated repression of IL2 and IL2RA (interleukin) in T cells by binding to the same domain than HDAC1. Interacts (when acetylated) with human CDK13, thereby increasing HIV-1 mRNA splicing and promoting the production of the doubly spliced HIV-1 protein Nef. Interacts with host TBP; this interaction modulates the activity of transcriptional pre-initiation complex. Interacts with host RELA. Interacts with host PLSCR1; this interaction negatively regulates Tat transactivation activity by altering its subcellular distribution. In terms of processing, asymmetrical arginine methylation by host PRMT6 seems to diminish the transactivation capacity of Tat and affects the interaction with host CCNT1. Acetylation by EP300, CREBBP, GCN5L2/GCN5 and PCAF regulates the transactivation activity of Tat. EP300-mediated acetylation of Lys-50 promotes dissociation of Tat from the TAR RNA through the competitive binding to PCAF's bromodomain. In addition, the non-acetylated Tat's N-terminus can also interact with PCAF. PCAF-mediated acetylation of Lys-28 enhances Tat's binding to CCNT1. Lys-50 is deacetylated by SIRT1. Post-translationally, polyubiquitination by host MDM2 does not target Tat to degradation, but activates its transactivation function and fosters interaction with CCNT1 and TAR RNA. In terms of processing, phosphorylated by EIF2AK2 on serine and threonine residues adjacent to the basic region important for TAR RNA binding and function. Phosphorylation of Tat by EIF2AK2 is dependent on the prior activation of EIF2AK2 by dsRNA.

It is found in the host nucleus. The protein localises to the host nucleolus. Its subcellular location is the host cytoplasm. The protein resides in the secreted. Transcriptional activator that increases RNA Pol II processivity, thereby increasing the level of full-length viral transcripts. Recognizes a hairpin structure at the 5'-LTR of the nascent viral mRNAs referred to as the transactivation responsive RNA element (TAR) and recruits the cyclin T1-CDK9 complex (P-TEFb complex) that will in turn hyperphosphorylate the RNA polymerase II to allow efficient elongation. The CDK9 component of P-TEFb and other Tat-activated kinases hyperphosphorylate the C-terminus of RNA Pol II that becomes stabilized and much more processive. Other factors such as HTATSF1/Tat-SF1, SUPT5H/SPT5, and HTATIP2 are also important for Tat's function. Besides its effect on RNA Pol II processivity, Tat induces chromatin remodeling of proviral genes by recruiting the histone acetyltransferases (HATs) CREBBP, EP300 and PCAF to the chromatin. This also contributes to the increase in proviral transcription rate, especially when the provirus integrates in transcriptionally silent region of the host genome. To ensure maximal activation of the LTR, Tat mediates nuclear translocation of NF-kappa-B by interacting with host RELA. Through its interaction with host TBP, Tat may also modulate transcription initiation. Tat can reactivate a latently infected cell by penetrating in it and transactivating its LTR promoter. In the cytoplasm, Tat is thought to act as a translational activator of HIV-1 mRNAs. In terms of biological role, extracellular circulating Tat can be endocytosed by surrounding uninfected cells via the binding to several surface receptors such as CD26, CXCR4, heparan sulfate proteoglycans (HSPG) or LDLR. Neurons are rarely infected, but they internalize Tat via their LDLR. Through its interaction with nuclear HATs, Tat is potentially able to control the acetylation-dependent cellular gene expression. Modulates the expression of many cellular genes involved in cell survival, proliferation or in coding for cytokines or cytokine receptors. Tat plays a role in T-cell and neurons apoptosis. Tat induced neurotoxicity and apoptosis probably contribute to neuroAIDS. Circulating Tat also acts as a chemokine-like and/or growth factor-like molecule that binds to specific receptors on the surface of the cells, affecting many cellular pathways. In the vascular system, Tat binds to ITGAV/ITGB3 and ITGA5/ITGB1 integrins dimers at the surface of endothelial cells and competes with bFGF for heparin-binding sites, leading to an excess of soluble bFGF. This Homo sapiens (Human) protein is Protein Tat.